The following is a 486-amino-acid chain: Keratin-3, type I cytoskeletal 51 kDa (486 aa).

A head region spans residues 1 to 125 (MSNYSIKQSA…AGGMDIFSTN (125 aa)). Residues 126 to 161 (EKQTMQNLNDRLASYLDKVHALETANTELERKIKEW) form a coil 1A region. Residues 126 to 442 (EKQTMQNLND…RLLDGDLSKP (317 aa)) enclose the IF rod domain. The linker 1 stretch occupies residues 162–184 (YEKQRPGSSSGDGAKDYSKYYTM). The interval 185–276 (INDLKNQIIA…KNHEDELKGM (92 aa)) is coil 1B. The linker 12 stretch occupies residues 277 to 299 (QVTQVGQVNVEMNAAPSSDLTKI). The segment at 300–438 (LNDMRSQYED…ETYRRLLDGD (139 aa)) is coil 2. The interval 435-466 (LDGDLSKPKSGGGTSTNTGSTSSKGSTRTVKR) is disordered. A tail region spans residues 439 to 486 (LSKPKSGGGTSTNTGSTSSKGSTRTVKRREIIEEVVDGKVVSTKVVDM). Low complexity predominate over residues 449–461 (STNTGSTSSKGST).

Belongs to the intermediate filament family. Heterotetramer of two type I and two type II keratins.

The sequence is that of Keratin-3, type I cytoskeletal 51 kDa from Xenopus laevis (African clawed frog).